The chain runs to 308 residues: Acetaldehyde dehydrogenase 2 (308 aa).

Position 9-12 (9-12 (SGNI)) interacts with NAD(+). Residue Cys127 is the Acyl-thioester intermediate of the active site. NAD(+) is bound by residues 158–166 (SAGPGTRAN) and Asn286.

This sequence belongs to the acetaldehyde dehydrogenase family.

It catalyses the reaction acetaldehyde + NAD(+) + CoA = acetyl-CoA + NADH + H(+). The protein is Acetaldehyde dehydrogenase 2 of Parafrankia sp. (strain EAN1pec).